A 314-amino-acid chain; its full sequence is (-)-isopiperitenone reductase (314 aa).

An NADP(+)-binding site is contributed by 10 to 33 (VTGANKGIGFEICRQLAEKGIIVI). Serine 182 contributes to the substrate binding site.

The protein belongs to the short-chain dehydrogenases/reductases (SDR) family.

The protein resides in the cytoplasm. It carries out the reaction (2R,5R)-isopulegone + NADP(+) = (6R)-isopiperitenone + NADPH + H(+). It functions in the pathway secondary metabolite biosynthesis; terpenoid biosynthesis. In terms of biological role, monoterpene synthase that catalyzes the specific reduction of the 1(2)-double bond of (-)-isopiperitenone to produce (+)-cis-isopulegone. Does not catalyze the reverse reaction. Unable to reduce (+)-pulegone, (+)-cis-isopulegone, (-)-menthone or the 1,2-double bond of (-)-carvone. Able to utilize NADH with 20% the efficiency of NADPH. The sequence is that of (-)-isopiperitenone reductase from Mentha piperita (Peppermint).